Here is a 559-residue protein sequence, read N- to C-terminus: MYLPEKSVLLELISRCSSLRVFKQIQTQLITRDLLRDDLIINKVVTFLGKSADFASYSSVILHSIRSVLSSFSYNTLLSSYAVCDKPRVTIFAYKTFVSNGFSPDMFTFPPVFKACGKFSGIREGKQIHGIVTKMGFYDDIYVQNSLVHFYGVCGESRNACKVFGEMPVRDVVSWTGIITGFTRTGLYKEALDTFSKMDVEPNLATYVCVLVSSGRVGCLSLGKGIHGLILKRASLISLETGNALIDMYVKCEQLSDAMRVFGELEKKDKVSWNSMISGLVHCERSKEAIDLFSLMQTSSGIKPDGHILTSVLSACASLGAVDHGRWVHEYILTAGIKWDTHIGTAIVDMYAKCGYIETALEIFNGIRSKNVFTWNALLGGLAIHGHGLESLRYFEEMVKLGFKPNLVTFLAALNACCHTGLVDEGRRYFHKMKSREYNLFPKLEHYGCMIDLLCRAGLLDEALELVKAMPVKPDVRICGAILSACKNRGTLMELPKEILDSFLDIEFEDSGVYVLLSNIFAANRRWDDVARIRRLMKVKGISKVPGSSYIEKFMTLDQ.

PPR repeat units follow at residues 70–104 (SSFS…GFSP), 105–139 (DMFT…GFYD), 140–170 (DIYV…MPVR), 171–201 (DVVS…MDVE), 203–233 (NLAT…ILKR), 238–268 (SLET…LEKK), 269–304 (DKVS…GIKP), 305–339 (DGHI…GIKW), 340–370 (DTHI…IRSK), 371–405 (NVFT…GFKP), 406–440 (NLVT…EYNL), and 443–473 (KLEH…MPVK). The interval 478–554 (ICGAILSACK…VPGSSYIEKF (77 aa)) is type E motif.

This sequence belongs to the PPR family. PCMP-E subfamily.

The protein is Pentatricopeptide repeat-containing protein At4g38010 (PCMP-E45) of Arabidopsis thaliana (Mouse-ear cress).